We begin with the raw amino-acid sequence, 28 residues long: uncharacterized protein (28 aa).

A helical transmembrane segment spans residues 5–27 (SAFHACNIIFLPLVKCASATIML).

The protein resides in the membrane. This is an uncharacterized protein from Saccharomyces cerevisiae (strain ATCC 204508 / S288c) (Baker's yeast).